The sequence spans 135 residues: Inner membrane protein YgfX (135 aa).

Over 1 to 11 (MVLWQSDLRVS) the chain is Cytoplasmic. A not required to inhibit FtsZ or MreB polymerization region spans residues 1–96 (MVLWQSDLRV…APWMIKSGMM (96 aa)). Residues 12 to 32 (WRAQWLSLLIHGLVAAVILLM) form a helical membrane-spanning segment. Residues 33–37 (PWPLS) lie on the Periplasmic side of the membrane. Residues 38–54 (YTPLWMVLLSLVVFDCV) form a helical membrane-spanning segment. At 55–135 (RSQRRINARQ…RILLQQETQR (81 aa)) the chain is on the cytoplasmic side.

As to quaternary structure, interacts with MreB and FtsZ; interaction with the latter requires FtsZ residues 33-49.

It localises to the cell inner membrane. Functionally, a probable inner membrane protein. Has been shown not to be a toxin, no effects on growth are seen in LB or minimal medium up to 6 or 21 hours (respectively) after induction of expression. Interacts with cytoskeletal proteins FtsZ and MreB; inhibits FtsZ GTP-dependent polymerization as well as MreB ATP-dependent polymerization. Restores production of prodigiosin antibiotic (Pig) in Serratia strains with deletions of sdhE-ygfX; overexpression of this protein and CptB also restores Pig production to a slightly lesser extent in Serratia. This Escherichia coli (strain K12) protein is Inner membrane protein YgfX.